A 527-amino-acid polypeptide reads, in one-letter code: F-box protein SKIP2 (527 aa).

Residues 39 to 85 (DRDFTGDLPDECLAHVFQFLGAGDRKRCSLVCKRWLLVDGQSRHRLS) enclose the F-box domain.

In terms of assembly, part of a SCF (ASK-cullin-F-box) protein ligase complex. Interacts with SKP1A/ASK1, SKP1B/ASK2 and ASK11.

Its subcellular location is the nucleus. It functions in the pathway protein modification; protein ubiquitination. Component of SCF(ASK-cullin-F-box) E3 ubiquitin ligase complexes, which may mediate the ubiquitination and subsequent proteasomal degradation of target proteins. The polypeptide is F-box protein SKIP2 (SKIP2) (Arabidopsis thaliana (Mouse-ear cress)).